Reading from the N-terminus, the 41-residue chain is Antimicrobial protein PN-AMP1 (41 aa).

Position 1 is a pyrrolidone carboxylic acid (Gln1). Residues Gln1–Ser41 form the Chitin-binding type-1 domain. 4 disulfides stabilise this stretch: Cys3/Cys18, Cys12/Cys24, Cys17/Cys31, and Cys35/Cys39.

Functionally, chitin-binding protein with a defensive function against numerous chitin containing fungal pathogens. It is also an inhibitor of Gram-positive bacteria such as B.subtilis. This Ipomoea nil (Japanese morning glory) protein is Antimicrobial protein PN-AMP1.